The chain runs to 155 residues: Small ribosomal subunit protein uS7c (155 aa).

This sequence belongs to the universal ribosomal protein uS7 family. In terms of assembly, part of the 30S ribosomal subunit.

Its subcellular location is the plastid. The protein resides in the chloroplast. One of the primary rRNA binding proteins, it binds directly to 16S rRNA where it nucleates assembly of the head domain of the 30S subunit. The polypeptide is Small ribosomal subunit protein uS7c (rps7) (Lilium superbum (Turk's cap lily)).